A 128-amino-acid chain; its full sequence is Large ribosomal subunit protein bL12 (128 aa).

Residues 97 to 128 (GAPSTLKEGVSKEDAEEAKKQLTEAGATVEVK) form a disordered region. Over residues 105-118 (GVSKEDAEEAKKQL) the composition is skewed to basic and acidic residues.

It belongs to the bacterial ribosomal protein bL12 family. In terms of assembly, homodimer. Part of the ribosomal stalk of the 50S ribosomal subunit. Forms a multimeric L10(L12)X complex, where L10 forms an elongated spine to which 2 to 4 L12 dimers bind in a sequential fashion. Binds GTP-bound translation factors.

Forms part of the ribosomal stalk which helps the ribosome interact with GTP-bound translation factors. Is thus essential for accurate translation. The protein is Large ribosomal subunit protein bL12 of Lawsonia intracellularis (strain PHE/MN1-00).